Here is a 710-residue protein sequence, read N- to C-terminus: Integrator complex subunit 10 (710 aa).

Phosphoserine occurs at positions 231, 381, and 382. Lysine 464 participates in a covalent cross-link: Glycyl lysine isopeptide (Lys-Gly) (interchain with G-Cter in SUMO2).

Belongs to the Integrator subunit 10 family. As to quaternary structure, component of the Integrator complex, composed of core subunits INTS1, INTS2, INTS3, INTS4, INTS5, INTS6, INTS7, INTS8, INTS9/RC74, INTS10, INTS11/CPSF3L, INTS12, INTS13, INTS14 and INTS15. The core complex associates with protein phosphatase 2A subunits PPP2CA and PPP2R1A, to form the Integrator-PP2A (INTAC) complex. INTS10 is part of the tail subcomplex, composed of INTS10, INTS13, INTS14 and INTS15.

It is found in the nucleus. In terms of biological role, component of the integrator complex, a multiprotein complex that terminates RNA polymerase II (Pol II) transcription in the promoter-proximal region of genes. The integrator complex provides a quality checkpoint during transcription elongation by driving premature transcription termination of transcripts that are unfavorably configured for transcriptional elongation: the complex terminates transcription by (1) catalyzing dephosphorylation of the C-terminal domain (CTD) of Pol II subunit POLR2A/RPB1 and SUPT5H/SPT5, (2) degrading the exiting nascent RNA transcript via endonuclease activity and (3) promoting the release of Pol II from bound DNA. The integrator complex is also involved in terminating the synthesis of non-coding Pol II transcripts, such as enhancer RNAs (eRNAs), small nuclear RNAs (snRNAs), telomerase RNAs and long non-coding RNAs (lncRNAs). Within the integrator complex, INTS10 is part of the integrator tail module that acts as a platform for the recruitment of transcription factors at promoters. May be not involved in the recruitment of cytoplasmic dynein to the nuclear envelope, probably as component of the integrator complex. The chain is Integrator complex subunit 10 from Homo sapiens (Human).